The sequence spans 585 residues: Phosphomethylpyrimidine synthase (585 aa).

Residues 89 to 107 are compositionally biased toward basic and acidic residues; that stretch reads RGDTESYEGRHVKPEDNGY. Residues 89 to 116 are disordered; it reads RGDTESYEGRHVKPEDNGYRSRNGSHQH. Substrate-binding positions include Asn-199, Met-228, Tyr-257, His-293, 313–315, 354–357, and Glu-393; these read SRG and DGLR. His-397 serves as a coordination point for Zn(2+). Tyr-420 serves as a coordination point for substrate. Residue His-461 coordinates Zn(2+). Residues Cys-541, Cys-544, and Cys-549 each contribute to the [4Fe-4S] cluster site.

Belongs to the ThiC family. [4Fe-4S] cluster serves as cofactor.

It catalyses the reaction 5-amino-1-(5-phospho-beta-D-ribosyl)imidazole + S-adenosyl-L-methionine = 4-amino-2-methyl-5-(phosphooxymethyl)pyrimidine + CO + 5'-deoxyadenosine + formate + L-methionine + 3 H(+). The protein operates within cofactor biosynthesis; thiamine diphosphate biosynthesis. Catalyzes the synthesis of the hydroxymethylpyrimidine phosphate (HMP-P) moiety of thiamine from aminoimidazole ribotide (AIR) in a radical S-adenosyl-L-methionine (SAM)-dependent reaction. This is Phosphomethylpyrimidine synthase from Bacillus pumilus (strain SAFR-032).